Here is a 158-residue protein sequence, read N- to C-terminus: Ribosome maturation factor RimP (158 aa).

Belongs to the RimP family.

It localises to the cytoplasm. Functionally, required for maturation of 30S ribosomal subunits. This chain is Ribosome maturation factor RimP, found in Deinococcus radiodurans (strain ATCC 13939 / DSM 20539 / JCM 16871 / CCUG 27074 / LMG 4051 / NBRC 15346 / NCIMB 9279 / VKM B-1422 / R1).